Here is a 185-residue protein sequence, read N- to C-terminus: Large ribosomal subunit protein uL5 (185 aa).

This sequence belongs to the universal ribosomal protein uL5 family. Part of the 50S ribosomal subunit; part of the 5S rRNA/L5/L18/L25 subcomplex. Contacts the 5S rRNA and the P site tRNA. Forms a bridge to the 30S subunit in the 70S ribosome.

Functionally, this is one of the proteins that bind and probably mediate the attachment of the 5S RNA into the large ribosomal subunit, where it forms part of the central protuberance. In the 70S ribosome it contacts protein S13 of the 30S subunit (bridge B1b), connecting the 2 subunits; this bridge is implicated in subunit movement. Contacts the P site tRNA; the 5S rRNA and some of its associated proteins might help stabilize positioning of ribosome-bound tRNAs. The chain is Large ribosomal subunit protein uL5 from Chelativorans sp. (strain BNC1).